The chain runs to 642 residues: Triacylglycerol lipase 3 (642 aa).

One can recognise a PNPLA domain in the interval 204-392 (LILQGGSLFG…NEIEPFLNIN (189 aa)). The GXSXG motif lies at 235 to 239 (GSSMG). The Nucleophile role is filled by serine 237. The short motif at 298–303 (HGYSQD) is the HXXXXD acyltransferase motif element. The active-site Proton acceptor is the glutamate 403. Positions 471-481 (RKTQRSSSQSP) are enriched in polar residues. Residues 471 to 502 (RKTQRSSSQSPIKAGTVEDLEPEPLMSPVPPS) are disordered.

It localises to the lipid droplet. The catalysed reaction is a triacylglycerol + H2O = a diacylglycerol + a fatty acid + H(+). It catalyses the reaction 1,2,3-tri-(9Z-octadecenoyl)-glycerol + H2O = di-(9Z)-octadecenoylglycerol + (9Z)-octadecenoate + H(+). It carries out the reaction di-(9Z)-octadecenoylglycerol + H2O = (9Z-octadecenoyl)-glycerol + (9Z)-octadecenoate + H(+). The enzyme catalyses a 1-acyl-sn-glycero-3-phosphoethanolamine + (9Z)-octadecenoyl-CoA = 1-acyl-2-(9Z)-octadecenoyl-sn-glycero-3-phosphoethanolamine + CoA. The catalysed reaction is a 1-acyl-sn-glycero-3-phosphoethanolamine + hexadecanoyl-CoA = 1-acyl-2-hexadecanoyl-sn-glycero-3-phosphoethanolamine + CoA. With respect to regulation, loses its lipolytic activity in cells lacking nonpolar lipids. Lipid particle-localized triacylglycerol (TAG) lipase. The lipid droplet/particle is a lipid storage compartment which serves as a depot of energy and building blocks for membrane lipid biosynthesis. Involved in the mobilization of the non-polar storage lipids triacylglycerols (TAGs) from lipid particles by hydrolysis of TAGs, releasing and supplying specific fatty acids to the appropriate metabolic pathways. Also catalyzes the acylation of lysophosphatidic acid (LPA). Important for efficient sporulation, but rather through its acyltransferase than lipase activity. The chain is Triacylglycerol lipase 3 (TGL3) from Saccharomyces cerevisiae (strain ATCC 204508 / S288c) (Baker's yeast).